We begin with the raw amino-acid sequence, 229 residues long: MAKKKAFIPFFYFTSIVFLPWLISLCCNKSLKIWITNWWNTRQCETFLNDIQEKSVLEKFIQLEDLFQLDEMIKEYPETDLQQFRLGIHKETIQFIKIHNEYHIHTILHFSTNLISFVILSGYSFWGKEKLFILNSWVQEFLYNLSDTIKAFSILLLTDLCIGFHSPHGWELMIGYIYKDFGFAHYEQILSGLVSTFPVILDTIFKYWIFRYLNRVSPSLVVIYHAIND.

The next 3 membrane-spanning stretches (helical) occupy residues alanine 6–cysteine 26, isoleucine 107–glycine 127, and isoleucine 189–isoleucine 209.

This sequence belongs to the CemA family.

Its subcellular location is the plastid. The protein resides in the chloroplast inner membrane. The enzyme catalyses K(+)(in) + H(+)(out) = K(+)(out) + H(+)(in). In terms of biological role, contributes to K(+)/H(+) antiport activity by supporting proton efflux to control proton extrusion and homeostasis in chloroplasts in a light-dependent manner to modulate photosynthesis. Prevents excessive induction of non-photochemical quenching (NPQ) under continuous-light conditions. Indirectly promotes efficient inorganic carbon uptake into chloroplasts. The polypeptide is Potassium/proton antiporter CemA (Arabis hirsuta (Hairy rock-cress)).